A 288-amino-acid chain; its full sequence is Transformer-2 protein homolog beta (288 aa).

2 disordered regions span residues 1-114 (MSDS…RANP) and 196-225 (TKRP…YDRG). An N-acetylserine modification is found at Ser2. Residues Ser2, Ser4, and Ser14 each carry the phosphoserine modification. Residues 17–28 (ASRSGSAHGSGK) are compositionally biased toward low complexity. Ser29 bears the Phosphoserine mark. Thr33 carries the post-translational modification Phosphothreonine. A compositionally biased stretch (basic residues) spans 59–109 (RSRRSSRRHYTRSRSRSRSHRRSRSRSYSRDYRRRHSHSHSPMSTRRRHVG). 6 positions are modified to phosphoserine: Ser83, Ser85, Ser87, Ser95, Ser97, and Ser99. Thr103 bears the Phosphothreonine mark. Positions 118-196 (CCLGVFGLSL…RRIRVDFSIT (79 aa)) constitute an RRM domain. The segment at 193-230 (FSITKRPHTPTPGIYMGRPTYGSSRRRDYYDRGYDRGY) is linker. Lys197 is covalently cross-linked (Glycyl lysine isopeptide (Lys-Gly) (interchain with G-Cter in SUMO2)). Phosphothreonine is present on residues Thr201 and Thr203. A phosphoserine mark is found at Ser215 and Ser237. Residue Arg241 is modified to Asymmetric dimethylarginine; alternate. Dimethylated arginine; alternate is present on Arg241. Arg241 carries the omega-N-methylarginine; alternate modification. The interval 242–288 (GGGGGGGGWRAAQDRDQIYRRRSPSPYYSRGGYRSRSRSRSYSPRRY) is disordered. Over residues 274–288 (YRSRSRSRSYSPRRY) the composition is skewed to basic residues.

Belongs to the splicing factor SR family. Found in a pre-mRNA exonic splicing enhancer (ESE) complex with TRA2B/SFRS10, SNRNP70, SNRPA1 and SRRM1. Binds to A3 enhancer proteins SFRS4, SFRS5, SFRS6 and SFRS9. Interacts with CPSF6, RBMY1A1, RBMX, RNPS1 and phosphorylated SFRS13A. Interacts with SAFB/SAFB1. Interacts with ILDR1 (via C-terminus) and ILDR2. Phosphorylated in the RS domains.

Its subcellular location is the nucleus. Sequence-specific RNA-binding protein which participates in the control of pre-mRNA splicing. Can either activate or suppress exon inclusion. Acts additively with RBMX to promote exon 7 inclusion of the survival motor neuron SMN2. Activates the splicing of MAPT/Tau exon 10. Alters pre-mRNA splicing patterns by antagonizing the effects of splicing regulators, like RBMX. Binds to the AG-rich SE2 domain in the SMN exon 7 RNA. Binds to pre-mRNA. The sequence is that of Transformer-2 protein homolog beta (TRA2B) from Bos taurus (Bovine).